The following is a 447-amino-acid chain: Signal recognition particle 54 kDa protein (447 aa).

GTP is bound by residues G103–T110, D185–R189, and T245–D248.

It belongs to the GTP-binding SRP family. SRP54 subfamily. Part of the signal recognition particle protein translocation system, which is composed of SRP and FtsY. Archaeal SRP consists of a 7S RNA molecule of 300 nucleotides and two protein subunits: SRP54 and SRP19.

Its subcellular location is the cytoplasm. The catalysed reaction is GTP + H2O = GDP + phosphate + H(+). Its function is as follows. Involved in targeting and insertion of nascent membrane proteins into the cytoplasmic membrane. Binds to the hydrophobic signal sequence of the ribosome-nascent chain (RNC) as it emerges from the ribosomes. The SRP-RNC complex is then targeted to the cytoplasmic membrane where it interacts with the SRP receptor FtsY. The protein is Signal recognition particle 54 kDa protein of Saccharolobus islandicus (strain L.S.2.15 / Lassen #1) (Sulfolobus islandicus).